The sequence spans 602 residues: Threonine--tRNA ligase (602 aa).

The segment at 208 to 499 (DHRKLGTELK…LTEHCAGEFP (292 aa)) is catalytic. Zn(2+)-binding residues include cysteine 300, histidine 351, and histidine 476.

This sequence belongs to the class-II aminoacyl-tRNA synthetase family. As to quaternary structure, homodimer. Zn(2+) serves as cofactor.

It is found in the cytoplasm. It carries out the reaction tRNA(Thr) + L-threonine + ATP = L-threonyl-tRNA(Thr) + AMP + diphosphate + H(+). Catalyzes the attachment of threonine to tRNA(Thr) in a two-step reaction: L-threonine is first activated by ATP to form Thr-AMP and then transferred to the acceptor end of tRNA(Thr). Also edits incorrectly charged L-seryl-tRNA(Thr). The chain is Threonine--tRNA ligase from Campylobacter jejuni subsp. jejuni serotype O:23/36 (strain 81-176).